Consider the following 121-residue polypeptide: Dihydroneopterin aldolase (121 aa).

Substrate contacts are provided by residues Glu-22, Tyr-54, and 73-74 (IE). The active-site Proton donor/acceptor is Lys-100.

This sequence belongs to the DHNA family. In terms of assembly, homooctamer. Four molecules assemble into a ring, and two rings come together to give a cylinder with a hole of at least 13 a diameter.

The enzyme catalyses 7,8-dihydroneopterin = 6-hydroxymethyl-7,8-dihydropterin + glycolaldehyde. The catalysed reaction is 7,8-dihydroneopterin = 7,8-dihydromonapterin. It participates in cofactor biosynthesis; tetrahydrofolate biosynthesis; 2-amino-4-hydroxy-6-hydroxymethyl-7,8-dihydropteridine diphosphate from 7,8-dihydroneopterin triphosphate: step 3/4. Functionally, catalyzes the conversion of 7,8-dihydroneopterin to 6-hydroxymethyl-7,8-dihydropterin. Can also catalyze the epimerization of carbon 2' of dihydroneopterin to dihydromonapterin. This is Dihydroneopterin aldolase (folB) from Staphylococcus epidermidis (strain ATCC 35984 / DSM 28319 / BCRC 17069 / CCUG 31568 / BM 3577 / RP62A).